Consider the following 636-residue polypeptide: 3-phosphoinositide-dependent protein kinase 1 (636 aa).

2 stretches are compositionally biased toward low complexity: residues 1-20 and 27-37; these read MEDL…NNDT and APTTLNLTPTA. Residues 1–45 are disordered; the sequence is MEDLTPTNTSLDTTTTNNDTTSDREAAPTTLNLTPTASESENSLS. A Protein kinase domain is found at 69-364; it reads FMFLQSMGEG…SQELMAHKFF (296 aa). Residues 79–81 and lysine 98 contribute to the ATP site; that span reads AYS. Residues 100–149 form a PIF-pocket region; the sequence is LQKSYLNRHQKMDAIIREKNILTYLSQECGGHPFVTQLYTHFHDQARIYF. Residues 152–154 and aspartate 158 contribute to the ATP site; that span reads GLV. The active-site Proton acceptor is the aspartate 197. ATP contacts are provided by aspartate 201 and aspartate 215. 2 disordered regions span residues 233–264 and 593–636; these read TDAN…EENT and KKSR…KKSP. The stretch at 550-631 forms a coiled coil; it reads DLEKKADEWC…QVSKKLSMQM (82 aa). Residues 597 to 624 are compositionally biased toward basic and acidic residues; the sequence is KEMMREQKALRRKQEKEEKKALKAEQVS.

Belongs to the protein kinase superfamily. AGC Ser/Thr protein kinase family. PDPK1 subfamily. Interacts directly with sgk-1, akt-1 and akt-2.

It is found in the cytoplasm. It carries out the reaction L-seryl-[protein] + ATP = O-phospho-L-seryl-[protein] + ADP + H(+). The enzyme catalyses L-threonyl-[protein] + ATP = O-phospho-L-threonyl-[protein] + ADP + H(+). Functionally, involved in the daf-2/insulin receptor-like transduction pathway, which controls longevity and prevents developmental arrest at the dauer stage. Phosphorylates and activates sgk-1, akt-1 and akt-2. The protein is 3-phosphoinositide-dependent protein kinase 1 of Caenorhabditis elegans.